We begin with the raw amino-acid sequence, 247 residues long: Large ribosomal subunit protein uL30 (247 aa).

Position 1 is an N-acetylmethionine (methionine 1). 4 repeat units span residues 7–17, 18–29, 30–41, and 42–53. The tract at residues 7–53 is 4 X 12 AA tandem repeats; sequence KKKVPAVPETLKKKRRNFAELKIKRLRKKFAQKMLRKARRKLIYEKA. Threonine 16 carries the post-translational modification Phosphothreonine. Lysine 123 is subject to N6-acetyllysine. Lysine 126 carries the N6-succinyllysine modification. At tyrosine 138 the chain carries Phosphotyrosine.

Belongs to the universal ribosomal protein uL30 family. As to quaternary structure, component of the large ribosomal subunit. Homodimer. Interacts with DHX33.

The protein localises to the cytoplasm. Its function is as follows. Component of the large ribosomal subunit. The ribosome is a large ribonucleoprotein complex responsible for the synthesis of proteins in the cell. Binds to G-rich structures in 28S rRNA and in mRNAs. Plays a regulatory role in the translation apparatus; inhibits cell-free translation of mRNAs. The polypeptide is Large ribosomal subunit protein uL30 (RPL7) (Pongo abelii (Sumatran orangutan)).